Consider the following 281-residue polypeptide: DegV domain-containing protein spr0652 (281 aa).

One can recognise a DegV domain in the interval 3–280 (WKIIADSGCD…EGGLLMGYEI (278 aa)). Positions 63 and 91 each coordinate hexadecanoate.

May bind long-chain fatty acids, such as palmitate, and may play a role in lipid transport or fatty acid metabolism. The protein is DegV domain-containing protein spr0652 of Streptococcus pneumoniae (strain ATCC BAA-255 / R6).